The chain runs to 128 residues: Large ribosomal subunit protein uL22 (128 aa).

It belongs to the universal ribosomal protein uL22 family. In terms of assembly, part of the 50S ribosomal subunit.

This protein binds specifically to 23S rRNA; its binding is stimulated by other ribosomal proteins, e.g. L4, L17, and L20. It is important during the early stages of 50S assembly. It makes multiple contacts with different domains of the 23S rRNA in the assembled 50S subunit and ribosome. Functionally, the globular domain of the protein is located near the polypeptide exit tunnel on the outside of the subunit, while an extended beta-hairpin is found that lines the wall of the exit tunnel in the center of the 70S ribosome. In Rhodopseudomonas palustris (strain BisA53), this protein is Large ribosomal subunit protein uL22.